Reading from the N-terminus, the 819-residue chain is Leucine--tRNA ligase (819 aa).

The short motif at 40-51 (PYPSGAGLHVGH) is the 'HIGH' region element. Residues 600–604 (KMSKS) carry the 'KMSKS' region motif. Position 603 (K603) interacts with ATP.

The protein belongs to the class-I aminoacyl-tRNA synthetase family.

It localises to the cytoplasm. It catalyses the reaction tRNA(Leu) + L-leucine + ATP = L-leucyl-tRNA(Leu) + AMP + diphosphate. The protein is Leucine--tRNA ligase of Chlamydia trachomatis serovar A (strain ATCC VR-571B / DSM 19440 / HAR-13).